The following is a 380-amino-acid chain: Chaperone protein DnaJ (380 aa).

A J domain is found at 5–70 (DFYETLGVSK…QKRAAYDRFG (66 aa)). The CR-type zinc-finger motif lies at 141–219 (GKTAQIRVPT…CHGQGRVTEE (79 aa)). Positions 154, 157, 171, 174, 193, 196, 207, and 210 each coordinate Zn(2+). CXXCXGXG motif repeat units lie at residues 154-161 (CEVCSGSG), 171-178 (CATCQGSG), 193-200 (CPTCQGRG), and 207-214 (CGKCHGQG).

Belongs to the DnaJ family. As to quaternary structure, homodimer. Requires Zn(2+) as cofactor.

The protein localises to the cytoplasm. Its function is as follows. Participates actively in the response to hyperosmotic and heat shock by preventing the aggregation of stress-denatured proteins and by disaggregating proteins, also in an autonomous, DnaK-independent fashion. Unfolded proteins bind initially to DnaJ; upon interaction with the DnaJ-bound protein, DnaK hydrolyzes its bound ATP, resulting in the formation of a stable complex. GrpE releases ADP from DnaK; ATP binding to DnaK triggers the release of the substrate protein, thus completing the reaction cycle. Several rounds of ATP-dependent interactions between DnaJ, DnaK and GrpE are required for fully efficient folding. Also involved, together with DnaK and GrpE, in the DNA replication of plasmids through activation of initiation proteins. This is Chaperone protein DnaJ from Allorhizobium ampelinum (strain ATCC BAA-846 / DSM 112012 / S4) (Agrobacterium vitis (strain S4)).